Consider the following 453-residue polypeptide: GTPase Der (453 aa).

2 EngA-type G domains span residues 4–169 (PIVA…PTQG) and 177–352 (TKIA…NEYQ). Residues 10–17 (GRPNVGKS), 57–61 (DTGGL), 120–123 (NKCE), 183–190 (GRPNVGKS), 230–234 (DTAGI), and 295–298 (NKWD) each bind GTP. The region spanning 353-438 (RRVTTSVINE…PIRLLWRGKK (86 aa)) is the KH-like domain.

It belongs to the TRAFAC class TrmE-Era-EngA-EngB-Septin-like GTPase superfamily. EngA (Der) GTPase family. In terms of assembly, associates with the 50S ribosomal subunit.

In terms of biological role, GTPase that plays an essential role in the late steps of ribosome biogenesis. The protein is GTPase Der of Trichodesmium erythraeum (strain IMS101).